Reading from the N-terminus, the 453-residue chain is Ribulose bisphosphate carboxylase large chain (453 aa).

A propeptide spanning residues 1-2 (MS) is cleaved from the precursor. P3 bears the N-acetylproline mark. K14 bears the N6,N6,N6-trimethyllysine mark. Substrate is bound by residues N123 and T173. Catalysis depends on K175, which acts as the Proton acceptor. Residue K177 participates in substrate binding. K201, D203, and E204 together coordinate Mg(2+). K201 is modified (N6-carboxylysine). The active-site Proton acceptor is H294. Residues R295, H327, and S379 each contribute to the substrate site.

This sequence belongs to the RuBisCO large chain family. Type I subfamily. Heterohexadecamer of 8 large chains and 8 small chains; disulfide-linked. The disulfide link is formed within the large subunit homodimers. Mg(2+) is required as a cofactor. In terms of processing, the disulfide bond which can form in the large chain dimeric partners within the hexadecamer appears to be associated with oxidative stress and protein turnover.

It localises to the plastid. The protein resides in the chloroplast. It catalyses the reaction 2 (2R)-3-phosphoglycerate + 2 H(+) = D-ribulose 1,5-bisphosphate + CO2 + H2O. The enzyme catalyses D-ribulose 1,5-bisphosphate + O2 = 2-phosphoglycolate + (2R)-3-phosphoglycerate + 2 H(+). RuBisCO catalyzes two reactions: the carboxylation of D-ribulose 1,5-bisphosphate, the primary event in carbon dioxide fixation, as well as the oxidative fragmentation of the pentose substrate in the photorespiration process. Both reactions occur simultaneously and in competition at the same active site. In Sherardia arvensis (Blue field-madder), this protein is Ribulose bisphosphate carboxylase large chain.